A 169-amino-acid polypeptide reads, in one-letter code: Small ribosomal subunit protein uS5 (169 aa).

Residues 13–76 (LVEKLVSVRR…EKARRNMKDV (64 aa)) form the S5 DRBM domain.

This sequence belongs to the universal ribosomal protein uS5 family. As to quaternary structure, part of the 30S ribosomal subunit. Contacts proteins S4 and S8.

In terms of biological role, with S4 and S12 plays an important role in translational accuracy. Its function is as follows. Located at the back of the 30S subunit body where it stabilizes the conformation of the head with respect to the body. The sequence is that of Small ribosomal subunit protein uS5 from Hydrogenovibrio crunogenus (strain DSM 25203 / XCL-2) (Thiomicrospira crunogena).